The chain runs to 123 residues: Zinc metalloproteinase-disintegrin-like jerdohagin (123 aa).

Positions 6–52 (RYLYIRHDREACTCHANSCIMSAYFSNSHVQYENYINDCKPQCILNE) constitute a Peptidase M12B domain. Histidine 12 is a Zn(2+) binding site. The cysteines at positions 19 and 24 are disulfide-linked. The Ca(2+) site is built by cysteine 48 and asparagine 51. Residues 53–80 (LHSWVECESGECCEQCRSECDIAESCTN) enclose the Disintegrin domain. 4 cysteine pairs are disulfide-bonded: cysteine 59–cysteine 65, cysteine 64–cysteine 78, cysteine 72–cysteine 90, and cysteine 106–cysteine 116. Residues 71–73 (ECD) carry the D/ECD-tripeptide motif.

Belongs to the venom metalloproteinase (M12B) family. P-III subfamily. P-IIIa sub-subfamily. In terms of assembly, monomer. Zn(2+) is required as a cofactor. In terms of processing, the N-terminus is blocked. In terms of tissue distribution, expressed by the venom gland.

It is found in the secreted. Its activity is regulated as follows. Its proteolytic and hemorrhagic activities are inhibited by EDTA, but not by PMSF. In terms of biological role, snake venom metalloproteinase that has high hemorrhagic activity and degrades the alpha-chain of fibrinogen (FGA), leaving the beta- and the gamma-chain intact. It may also inhibit platelet aggregation. Cleaves insulin B chain at '25-Phe-|-Val-26', '26-Val-|-Asn-27', '29-His-|-Leu-30', '30-Leu-|-Cys-31', '33-Ser-|-His-34', '35-Leu-|-Val-36', '40-Tyr-|-Leu-41', '41-Leu-|-Val-42', '42-Val-|-Cys-43', '43-Cys-|-Gly-44', '44-Gly-|-Glu-45', '46-Arg-|-Gly-47', '47-Gly-|-Phe-48', '49-Phe-|-Tyr-50' and '52-Pro-|-Lys-53' bonds. Also cleaves human prothrombin (72 kDa) and activation fragment F1 (27 kDa) of activated human prothrombin, to generate two new proteins of 68 and 23 kDa. This Protobothrops jerdonii (Jerdon's pitviper) protein is Zinc metalloproteinase-disintegrin-like jerdohagin.